A 57-amino-acid chain; its full sequence is Large ribosomal subunit protein bL32 (57 aa).

The span at 1–16 (MAVQKSRKTPSRRGMR) shows a compositional bias: basic residues. The disordered stretch occupies residues 1–37 (MAVQKSRKTPSRRGMRRSHDALSTTAITVDETTGELH). Over residues 21-31 (ALSTTAITVDE) the composition is skewed to polar residues.

It belongs to the bacterial ribosomal protein bL32 family.

The chain is Large ribosomal subunit protein bL32 from Hydrogenovibrio crunogenus (strain DSM 25203 / XCL-2) (Thiomicrospira crunogena).